Reading from the N-terminus, the 307-residue chain is MIFNHHQSVMLNESIGALNIKTDGIYIDATFGRGGHAQGILNKLGEQGKLIAFDQDINAIEYAHKNFTDSRLTLIYSAFSNMLNIITQQGLMSKIDGILMDLGVSSPQLDNAQRGFSFKADGPLDMRMNQTTGMSATQWLNLANEEEIANVIYQFGDEKRSRHIATRIKKYQQKHTLETTLALAGIVSKVVKRQKNKHPATRTFQAIRIFINQELKQLEDVLEQSKDILRKDGRLSIISFHSIEDRIVKHFIQKNSRQKNLPKGLPIIDYKIEKTCLKNLGKYFASKAEISRNKRARSAILRVASKN.

S-adenosyl-L-methionine is bound by residues 34 to 36, D54, F79, D101, and Q108; that span reads GGH.

The protein belongs to the methyltransferase superfamily. RsmH family.

The protein localises to the cytoplasm. The catalysed reaction is cytidine(1402) in 16S rRNA + S-adenosyl-L-methionine = N(4)-methylcytidine(1402) in 16S rRNA + S-adenosyl-L-homocysteine + H(+). Functionally, specifically methylates the N4 position of cytidine in position 1402 (C1402) of 16S rRNA. This chain is Ribosomal RNA small subunit methyltransferase H, found in Ruthia magnifica subsp. Calyptogena magnifica.